Here is a 64-residue protein sequence, read N- to C-terminus: QINGSYKLEKSDNFDAFLKELGLNFVTRNLAKSATPTVEVSVNGDSYTIKTASTLKNTEISFKL.

This sequence belongs to the calycin superfamily. Fatty-acid binding protein (FABP) family.

It is found in the cytoplasm. FABPs are thought to play a role in the intracellular transport of long-chain fatty acids and their acyl-CoA esters. This chain is Fatty acid-binding protein, found in Acarus siro (Flour mite).